We begin with the raw amino-acid sequence, 233 residues long: Biosynthetic peptidoglycan transglycosylase (233 aa).

A helical membrane pass occupies residues I17–L37.

It belongs to the glycosyltransferase 51 family.

Its subcellular location is the cell inner membrane. It carries out the reaction [GlcNAc-(1-&gt;4)-Mur2Ac(oyl-L-Ala-gamma-D-Glu-L-Lys-D-Ala-D-Ala)](n)-di-trans,octa-cis-undecaprenyl diphosphate + beta-D-GlcNAc-(1-&gt;4)-Mur2Ac(oyl-L-Ala-gamma-D-Glu-L-Lys-D-Ala-D-Ala)-di-trans,octa-cis-undecaprenyl diphosphate = [GlcNAc-(1-&gt;4)-Mur2Ac(oyl-L-Ala-gamma-D-Glu-L-Lys-D-Ala-D-Ala)](n+1)-di-trans,octa-cis-undecaprenyl diphosphate + di-trans,octa-cis-undecaprenyl diphosphate + H(+). The protein operates within cell wall biogenesis; peptidoglycan biosynthesis. Functionally, peptidoglycan polymerase that catalyzes glycan chain elongation from lipid-linked precursors. In Rhizobium leguminosarum bv. trifolii (strain WSM2304), this protein is Biosynthetic peptidoglycan transglycosylase.